Here is a 77-residue protein sequence, read N- to C-terminus: Acyl carrier protein (77 aa).

A Carrier domain is found at 1 to 75 (MVFEKVKDII…DVVNYIKAHT (75 aa)). The residue at position 35 (Ser35) is an O-(pantetheine 4'-phosphoryl)serine.

The protein belongs to the acyl carrier protein (ACP) family. In terms of processing, 4'-phosphopantetheine is transferred from CoA to a specific serine of apo-ACP by AcpS. This modification is essential for activity because fatty acids are bound in thioester linkage to the sulfhydryl of the prosthetic group.

The protein resides in the cytoplasm. Its pathway is lipid metabolism; fatty acid biosynthesis. In terms of biological role, carrier of the growing fatty acid chain in fatty acid biosynthesis. The sequence is that of Acyl carrier protein from Clostridium acetobutylicum (strain ATCC 824 / DSM 792 / JCM 1419 / IAM 19013 / LMG 5710 / NBRC 13948 / NRRL B-527 / VKM B-1787 / 2291 / W).